Consider the following 351-residue polypeptide: N-acetyl-gamma-glutamyl-phosphate reductase (351 aa).

Residue cysteine 150 is part of the active site.

The protein belongs to the NAGSA dehydrogenase family. Type 1 subfamily.

The protein resides in the cytoplasm. It catalyses the reaction N-acetyl-L-glutamate 5-semialdehyde + phosphate + NADP(+) = N-acetyl-L-glutamyl 5-phosphate + NADPH + H(+). Its pathway is amino-acid biosynthesis; L-arginine biosynthesis; N(2)-acetyl-L-ornithine from L-glutamate: step 3/4. Catalyzes the NADPH-dependent reduction of N-acetyl-5-glutamyl phosphate to yield N-acetyl-L-glutamate 5-semialdehyde. In Heliobacterium modesticaldum (strain ATCC 51547 / Ice1), this protein is N-acetyl-gamma-glutamyl-phosphate reductase.